The chain runs to 524 residues: Ribonuclease Y (524 aa).

The chain crosses the membrane as a helical span at residues 7–27; it reads LGGLLTGIVIAIIASIIASVI. One can recognise a KH domain in the interval 214–299; that stretch reads TVSVVPLPND…EMVEKARKEV (86 aa). Positions 340–433 constitute an HD domain; it reads VLSHSIEVAR…VQAADSISAA (94 aa).

Belongs to the RNase Y family.

It is found in the cell membrane. Its function is as follows. Endoribonuclease that initiates mRNA decay. The chain is Ribonuclease Y from Acetivibrio thermocellus (strain ATCC 27405 / DSM 1237 / JCM 9322 / NBRC 103400 / NCIMB 10682 / NRRL B-4536 / VPI 7372) (Clostridium thermocellum).